Here is a 500-residue protein sequence, read N- to C-terminus: Cytochrome P450 71B22 (500 aa).

The chain crosses the membrane as a helical span at residues methionine 1–leucine 21. Residue cysteine 441 participates in heme binding.

The protein belongs to the cytochrome P450 family. It depends on heme as a cofactor.

The protein localises to the membrane. This chain is Cytochrome P450 71B22 (CYP71B22), found in Arabidopsis thaliana (Mouse-ear cress).